Reading from the N-terminus, the 367-residue chain is Pre-small/secreted glycoprotein (367 aa).

Positions 1–33 are cleaved as a signal peptide; it reads MGSGYQLLQLPRERFRKTSFLVWVIILFQRAIS. N-linked (GlcNAc...) asparagine; by host glycosylation occurs at N41. Disulfide bonds link C109–C136 and C122–C148. N-linked (GlcNAc...) asparagine; by host glycans are attached at residues N205, N229, N239, N258, and N269.

The protein belongs to the filoviruses glycoprotein family. In terms of assembly, homodimer; disulfide-linked. The homodimers are linked by two disulfide bonds in a parallel orientation. Monomer. Post-translationally, this precursor is processed into mature sGP and delta-peptide by host furin or furin-like proteases. The cleavage site corresponds to the furin optimal cleavage sequence [KR]-X-[KR]-R. N-glycosylated. In terms of processing, O-glycosylated.

It is found in the secreted. Its function is as follows. Seems to possess an anti-inflammatory activity as it can reverse the barrier-decreasing effects of TNF alpha. Might therefore contribute to the lack of inflammatory reaction seen during infection in spite the of extensive necrosis and massive virus production. Does not seem to be involved in activation of primary macrophages. Does not seem to interact specifically with neutrophils. Functionally, viroporin that permeabilizes mammalian cell plasma membranes. It acts by altering permeation of ionic compounds and small molecules. This activity may lead to viral enterotoxic activity. In Epomops franqueti (Franquet's epauletted fruit bat), this protein is Pre-small/secreted glycoprotein (GP).